A 153-amino-acid polypeptide reads, in one-letter code: Ubiquitin-conjugating enzyme E2 13 (153 aa).

Positions 3-149 (SLPKRIIKET…AREWTKLYAK (147 aa)) constitute a UBC core domain. Cysteine 87 serves as the catalytic Glycyl thioester intermediate. Residue lysine 92 forms a Glycyl lysine isopeptide (Lys-Gly) (interchain with G-Cter in ubiquitin) linkage.

Belongs to the ubiquitin-conjugating enzyme family. In terms of assembly, heterodimer with MMS2.

The catalysed reaction is S-ubiquitinyl-[E1 ubiquitin-activating enzyme]-L-cysteine + [E2 ubiquitin-conjugating enzyme]-L-cysteine = [E1 ubiquitin-activating enzyme]-L-cysteine + S-ubiquitinyl-[E2 ubiquitin-conjugating enzyme]-L-cysteine.. It functions in the pathway protein modification; protein ubiquitination. Its function is as follows. Has a role in the DNA error-free postreplication repair (PRR) pathway. The UBC13/MMS2 heterodimer catalyzes the synthesis of non-canonical poly-ubiquitin chains that are linked through 'Lys-63'. This chain is Ubiquitin-conjugating enzyme E2 13 (UBC13), found in Saccharomyces cerevisiae (strain ATCC 204508 / S288c) (Baker's yeast).